The chain runs to 102 residues: Complement inhibitor RaCI3 (102 aa).

A signal peptide spans 1-24 (MAALNGLVLLLLTISAMFISECYS). Disulfide bonds link Cys-37-Cys-61, Cys-42-Cys-63, and Cys-57-Cys-78.

Belongs to the RaCI family. In terms of tissue distribution, expressed in salivary glands.

The protein resides in the secreted. Its function is as follows. Complement inhibitor. Prevents complement-mediated C5 activation by binding to C5. Binds C5 at a different binding site than the other tick complement inhibitors OmCI and CirpT1, and the drug eculizumab. Inhibits complement in human and guinea pig but not in other species tested (rabbit, rat, mouse, and pig). The sequence is that of Complement inhibitor RaCI3 from Dermacentor andersoni (Rocky mountain wood tick).